We begin with the raw amino-acid sequence, 252 residues long: Small ribosomal subunit protein uS2 (252 aa).

This sequence belongs to the universal ribosomal protein uS2 family. As to quaternary structure, component of the small ribosomal subunit. Mature ribosomes consist of a small (40S) and a large (60S) subunit. The 40S subunit contains about 33 different proteins and 1 molecule of RNA (18S). The 60S subunit contains about 49 different proteins and 3 molecules of RNA (25S, 5.8S and 5S). Interacts with RPS21.

Its subcellular location is the cytoplasm. Required for the assembly and/or stability of the 40S ribosomal subunit. Required for the processing of the 20S rRNA-precursor to mature 18S rRNA in a late step of the maturation of 40S ribosomal subunits. The chain is Small ribosomal subunit protein uS2 from Encephalitozoon cuniculi (strain GB-M1) (Microsporidian parasite).